A 197-amino-acid polypeptide reads, in one-letter code: MRYPWFRLAIFIVGCLFPVWWLYEAAMNLLGPDPGKIMMDRLGLGALTFLLVTLSMTPLQKLTGWSGWIVVRRQLGLWVFAYIVLHILCYLFFILGLDWGQLAVELRKRPYIIVGALGFLGLLVLAVTSNRYSQRRLGARWKKLHRLVYAVLGLGLLHFLWIVRSDLREWAIYAFIGAVLMVLRIPAVARALPKVAR.

A run of 6 helical transmembrane segments spans residues I10–L30, L42–L62, L75–L95, P110–N130, L147–L167, and E169–A189.

Belongs to the MsrQ family. As to quaternary structure, heterodimer of a catalytic subunit (MsrP) and a heme-binding subunit (MsrQ). It depends on FMN as a cofactor. Heme b is required as a cofactor.

The protein localises to the cell inner membrane. Part of the MsrPQ system that repairs oxidized periplasmic proteins containing methionine sulfoxide residues (Met-O), using respiratory chain electrons. Thus protects these proteins from oxidative-stress damage caused by reactive species of oxygen and chlorine generated by the host defense mechanisms. MsrPQ is essential for the maintenance of envelope integrity under bleach stress, rescuing a wide series of structurally unrelated periplasmic proteins from methionine oxidation. MsrQ provides electrons for reduction to the reductase catalytic subunit MsrP, using the quinone pool of the respiratory chain. This Pseudomonas putida (strain ATCC 47054 / DSM 6125 / CFBP 8728 / NCIMB 11950 / KT2440) protein is Protein-methionine-sulfoxide reductase heme-binding subunit MsrQ.